A 348-amino-acid chain; its full sequence is NADH-quinone oxidoreductase subunit H (348 aa).

8 helical membrane passes run 7–27, 82–102, 115–135, 161–181, 199–219, 251–271, 287–307, and 322–342; these read IWLL…VVLL, GVFL…WAVI, VGLL…IMGG, IGFV…TTIV, FLDW…ISAL, LFFL…TILF, VPGI…FAMV, and LGWK…ATFL.

This sequence belongs to the complex I subunit 1 family. As to quaternary structure, NDH-1 is composed of 14 different subunits. Subunits NuoA, H, J, K, L, M, N constitute the membrane sector of the complex.

It is found in the cell inner membrane. The enzyme catalyses a quinone + NADH + 5 H(+)(in) = a quinol + NAD(+) + 4 H(+)(out). Its function is as follows. NDH-1 shuttles electrons from NADH, via FMN and iron-sulfur (Fe-S) centers, to quinones in the respiratory chain. The immediate electron acceptor for the enzyme in this species is believed to be ubiquinone. Couples the redox reaction to proton translocation (for every two electrons transferred, four hydrogen ions are translocated across the cytoplasmic membrane), and thus conserves the redox energy in a proton gradient. This subunit may bind ubiquinone. The polypeptide is NADH-quinone oxidoreductase subunit H (Bartonella quintana (strain Toulouse) (Rochalimaea quintana)).